Here is a 142-residue protein sequence, read N- to C-terminus: MFIGEYQHSLDSKNRMIVPAKLREDLGEMFVITKGLDGCIYAYTINEWRILENKLKTLPLTNKDARAFVRFFFSGACIVDLDKQGRGLIPQNLKEYAGIEKDIVSIGVLSRVEIWSREKWINYNESDIDYDLIAEKMNDLGI.

SpoVT-AbrB domains are found at residues 5–47 and 76–119; these read EYQH…TINE and ACIV…SREK.

This sequence belongs to the MraZ family. Forms oligomers.

It is found in the cytoplasm. Its subcellular location is the nucleoid. In Clostridium botulinum (strain Eklund 17B / Type B), this protein is Transcriptional regulator MraZ.